Reading from the N-terminus, the 478-residue chain is Ribulose bisphosphate carboxylase large chain (478 aa).

Positions 1–2 are excised as a propeptide; that stretch reads MS. Residue Pro3 is modified to N-acetylproline. Lys14 carries the N6,N6,N6-trimethyllysine modification. Residues Asn123 and Thr173 each contribute to the substrate site. Lys175 (proton acceptor) is an active-site residue. A substrate-binding site is contributed by Lys177. Mg(2+) contacts are provided by Lys201, Asp203, and Glu204. N6-carboxylysine is present on Lys201. His294 serves as the catalytic Proton acceptor. The substrate site is built by Arg295, His327, and Ser379.

It belongs to the RuBisCO large chain family. Type I subfamily. In terms of assembly, heterohexadecamer of 8 large chains and 8 small chains; disulfide-linked. The disulfide link is formed within the large subunit homodimers. Requires Mg(2+) as cofactor. The disulfide bond which can form in the large chain dimeric partners within the hexadecamer appears to be associated with oxidative stress and protein turnover.

The protein resides in the plastid. Its subcellular location is the chloroplast. It catalyses the reaction 2 (2R)-3-phosphoglycerate + 2 H(+) = D-ribulose 1,5-bisphosphate + CO2 + H2O. The catalysed reaction is D-ribulose 1,5-bisphosphate + O2 = 2-phosphoglycolate + (2R)-3-phosphoglycerate + 2 H(+). In terms of biological role, ruBisCO catalyzes two reactions: the carboxylation of D-ribulose 1,5-bisphosphate, the primary event in carbon dioxide fixation, as well as the oxidative fragmentation of the pentose substrate in the photorespiration process. Both reactions occur simultaneously and in competition at the same active site. This is Ribulose bisphosphate carboxylase large chain from Neurachne tenuifolia.